We begin with the raw amino-acid sequence, 618 residues long: DNA mismatch repair protein MutL (618 aa).

Over residues 366–378 (AEPTAAREPATPR) the composition is skewed to low complexity. Residues 366-403 (AEPTAAREPATPRYSDGASGGNGGRQSAGGWPHAQPGY) form a disordered region. Residues 383–392 (ASGGNGGRQS) show a composition bias toward gly residues.

This sequence belongs to the DNA mismatch repair MutL/HexB family.

Its function is as follows. This protein is involved in the repair of mismatches in DNA. It is required for dam-dependent methyl-directed DNA mismatch repair. May act as a 'molecular matchmaker', a protein that promotes the formation of a stable complex between two or more DNA-binding proteins in an ATP-dependent manner without itself being part of a final effector complex. This Salmonella typhi protein is DNA mismatch repair protein MutL.